We begin with the raw amino-acid sequence, 301 residues long: Phospholipase A1 (301 aa).

The cysteines at positions 4 and 87 are disulfide-linked. Residue S137 is the Nucleophile of the active site. The Charge relay system role is filled by D165. Cystine bridges form between C176–C181 and C219–C228. The active-site Charge relay system is H230. 3 cysteine pairs are disulfide-bonded: C245/C269, C246/C294, and C262/C267.

This sequence belongs to the AB hydrolase superfamily. Lipase family. Expressed by the venom gland.

The protein resides in the secreted. It carries out the reaction a 1,2-diacyl-sn-glycero-3-phosphocholine + H2O = a 2-acyl-sn-glycero-3-phosphocholine + a fatty acid + H(+). Its function is as follows. Catalyzes the hydrolysis of phosphatidylcholine with phospholipase A1 activity. May act as an allergen and induce hemolytic activity. The sequence is that of Phospholipase A1 from Vespa crabro (European hornet).